A 352-amino-acid chain; its full sequence is Peptide chain release factor 1 (352 aa).

Q229 carries the N5-methylglutamine modification.

It belongs to the prokaryotic/mitochondrial release factor family. In terms of processing, methylated by PrmC. Methylation increases the termination efficiency of RF1.

Its subcellular location is the cytoplasm. Peptide chain release factor 1 directs the termination of translation in response to the peptide chain termination codons UAG and UAA. The polypeptide is Peptide chain release factor 1 (Acidiphilium cryptum (strain JF-5)).